The following is a 130-amino-acid chain: Glycine cleavage system H protein (130 aa).

The region spanning 24-106 is the Lipoyl-binding domain; that stretch reads TVTIGITDHA…YDEGWFFKVK (83 aa). K65 carries the N6-lipoyllysine modification.

It belongs to the GcvH family. In terms of assembly, the glycine cleavage system is composed of four proteins: P, T, L and H. (R)-lipoate serves as cofactor.

The glycine cleavage system catalyzes the degradation of glycine. The H protein shuttles the methylamine group of glycine from the P protein to the T protein. The polypeptide is Glycine cleavage system H protein (Teredinibacter turnerae (strain ATCC 39867 / T7901)).